We begin with the raw amino-acid sequence, 342 residues long: Methionine import ATP-binding protein MetN 3 (342 aa).

Positions 2 to 241 constitute an ABC transporter domain; the sequence is ISLKGISKTF…PKEQMTKEFV (240 aa). An ATP-binding site is contributed by 38–45; it reads GYSGAGKS.

Belongs to the ABC transporter superfamily. Methionine importer (TC 3.A.1.24) family. As to quaternary structure, the complex is composed of two ATP-binding proteins (MetN), two transmembrane proteins (MetI) and a solute-binding protein (MetQ).

Its subcellular location is the cell membrane. The catalysed reaction is L-methionine(out) + ATP + H2O = L-methionine(in) + ADP + phosphate + H(+). The enzyme catalyses D-methionine(out) + ATP + H2O = D-methionine(in) + ADP + phosphate + H(+). Functionally, part of the ABC transporter complex MetNIQ involved in methionine import. Responsible for energy coupling to the transport system. In Shouchella clausii (strain KSM-K16) (Alkalihalobacillus clausii), this protein is Methionine import ATP-binding protein MetN 3.